Consider the following 512-residue polypeptide: 2-isopropylmalate synthase (512 aa).

One can recognise a Pyruvate carboxyltransferase domain in the interval 5-268 (LIIFDTTLRD…DLNIDTTHIV (264 aa)). The Mn(2+) site is built by Asp14, His202, His204, and Asn239. The tract at residues 394–512 (AFVSLSQHSE…SQAEKVAAQG (119 aa)) is regulatory domain.

It belongs to the alpha-IPM synthase/homocitrate synthase family. LeuA type 1 subfamily. As to quaternary structure, homodimer. It depends on Mn(2+) as a cofactor.

The protein localises to the cytoplasm. It catalyses the reaction 3-methyl-2-oxobutanoate + acetyl-CoA + H2O = (2S)-2-isopropylmalate + CoA + H(+). Its pathway is amino-acid biosynthesis; L-leucine biosynthesis; L-leucine from 3-methyl-2-oxobutanoate: step 1/4. Functionally, catalyzes the condensation of the acetyl group of acetyl-CoA with 3-methyl-2-oxobutanoate (2-ketoisovalerate) to form 3-carboxy-3-hydroxy-4-methylpentanoate (2-isopropylmalate). The polypeptide is 2-isopropylmalate synthase (Variovorax paradoxus (strain S110)).